The sequence spans 376 residues: Probable dual-specificity RNA methyltransferase RlmN (376 aa).

A disordered region spans residues 1–25 (MSDSERTSLPLVFDEPRGRKKPPRH). Residue Glu-113 is the Proton acceptor of the active site. Positions 119 to 362 (YPDRATMCVS…PTTVRDTRGR (244 aa)) constitute a Radical SAM core domain. A disulfide bond links Cys-126 and Cys-368. [4Fe-4S] cluster is bound by residues Cys-133, Cys-137, and Cys-140. Residues 188 to 189 (GE), Ser-222, 245 to 247 (SLH), and Asn-325 contribute to the S-adenosyl-L-methionine site. Cys-368 (S-methylcysteine intermediate) is an active-site residue.

This sequence belongs to the radical SAM superfamily. RlmN family. Requires [4Fe-4S] cluster as cofactor.

Its subcellular location is the cytoplasm. It carries out the reaction adenosine(2503) in 23S rRNA + 2 reduced [2Fe-2S]-[ferredoxin] + 2 S-adenosyl-L-methionine = 2-methyladenosine(2503) in 23S rRNA + 5'-deoxyadenosine + L-methionine + 2 oxidized [2Fe-2S]-[ferredoxin] + S-adenosyl-L-homocysteine. It catalyses the reaction adenosine(37) in tRNA + 2 reduced [2Fe-2S]-[ferredoxin] + 2 S-adenosyl-L-methionine = 2-methyladenosine(37) in tRNA + 5'-deoxyadenosine + L-methionine + 2 oxidized [2Fe-2S]-[ferredoxin] + S-adenosyl-L-homocysteine. Functionally, specifically methylates position 2 of adenine 2503 in 23S rRNA and position 2 of adenine 37 in tRNAs. In Nocardioides sp. (strain ATCC BAA-499 / JS614), this protein is Probable dual-specificity RNA methyltransferase RlmN.